We begin with the raw amino-acid sequence, 102 residues long: Citrate lyase acyl carrier protein (102 aa).

Position 14 is an O-(phosphoribosyl dephospho-coenzyme A)serine (serine 14).

This sequence belongs to the CitD family. Oligomer with a subunit composition of (alpha,beta,gamma)6.

Its subcellular location is the cytoplasm. Covalent carrier of the coenzyme of citrate lyase. In Streptococcus pyogenes serotype M4 (strain MGAS10750), this protein is Citrate lyase acyl carrier protein.